The following is a 246-amino-acid chain: Probable hydroxyethylthiazole kinase (246 aa).

Substrate is bound at residue M50. 2 residues coordinate ATP: R125 and T145. G172 is a binding site for substrate.

Belongs to the Thz kinase family. Requires Mg(2+) as cofactor.

It catalyses the reaction 5-(2-hydroxyethyl)-4-methylthiazole + ATP = 4-methyl-5-(2-phosphooxyethyl)-thiazole + ADP + H(+). Its pathway is cofactor biosynthesis; thiamine diphosphate biosynthesis; 4-methyl-5-(2-phosphoethyl)-thiazole from 5-(2-hydroxyethyl)-4-methylthiazole: step 1/1. Its function is as follows. Catalyzes the phosphorylation of the hydroxyl group of 4-methyl-5-beta-hydroxyethylthiazole (THZ). This chain is Probable hydroxyethylthiazole kinase (thiM), found in Agrobacterium fabrum (strain C58 / ATCC 33970) (Agrobacterium tumefaciens (strain C58)).